The following is a 141-amino-acid chain: Hemoglobin subunit alpha (141 aa).

The Globin domain maps to 1–141 (VLSPADKSNV…VSTVLVSKYR (141 aa)). Ser-3 carries the post-translational modification Phosphoserine. Residues Lys-7 and Lys-11 each carry the N6-succinyllysine modification. N6-acetyllysine; alternate is present on Lys-16. Lys-16 is subject to N6-succinyllysine; alternate. Position 24 is a phosphotyrosine (Tyr-24). At Ser-35 the chain carries Phosphoserine. Lys-40 carries the N6-succinyllysine modification. Position 49 is a phosphoserine (Ser-49). His-58 serves as a coordination point for O2. A heme b-binding site is contributed by His-87. Ser-102 bears the Phosphoserine mark. Thr-108 carries the phosphothreonine modification. Ser-124 is subject to Phosphoserine. Thr-134 carries the post-translational modification Phosphothreonine. At Ser-138 the chain carries Phosphoserine.

Belongs to the globin family. In terms of assembly, heterotetramer of two alpha chains and two beta chains. In terms of tissue distribution, red blood cells.

Functionally, involved in oxygen transport from the lung to the various peripheral tissues. Its function is as follows. Hemopressin acts as an antagonist peptide of the cannabinoid receptor CNR1. Hemopressin-binding efficiently blocks cannabinoid receptor CNR1 and subsequent signaling. The chain is Hemoglobin subunit alpha (HBA) from Chalinolobus morio (Chocolate-wattled bat).